We begin with the raw amino-acid sequence, 1584 residues long: Adhesion G protein-coupled receptor B1 (1584 aa).

A signal peptide spans 1 to 30; the sequence is MRGQAAAPGPVWILAPLLLLLLLLGRRARA. Residues 31 to 948 lie on the Extracellular side of the membrane; it reads AAGADAGPGP…ANMEKATLPS (918 aa). N-linked (GlcNAc...) asparagine glycosylation occurs at Asn-64. The disordered stretch occupies residues 146 to 167; sequence RRQQPPQHDGLRPRAGPPGPTD. Residues 261–315 enclose the TSP type-1 1 domain; the sequence is TGGWKLWSLWGECTRDCGGGLQTRTRTCLPAPGVEGGGCEGVLEEGRQCNREACG. 3 cysteine pairs are disulfide-bonded: Cys-273/Cys-309, Cys-277/Cys-314, and Cys-288/Cys-299. Residues 313–335 are disordered; it reads ACGPAGRTSSRSQSLRSTDARRR. Residues 319–329 show a composition bias toward low complexity; sequence RTSSRSQSLRS. TSP type-1 domains are found at residues 354–407, 409–462, 467–520, and 522–575; these read DPAA…AVCP, HGAW…ALCP, DGNW…QQCP, and DGKW…QRCP. 14 cysteine pairs are disulfide-bonded: Cys-366/Cys-400, Cys-370/Cys-406, Cys-381/Cys-390, Cys-421/Cys-456, Cys-425/Cys-461, Cys-436/Cys-446, Cys-479/Cys-514, Cys-483/Cys-519, Cys-494/Cys-504, Cys-534/Cys-569, Cys-538/Cys-574, Cys-549/Cys-559, Cys-581/Cys-616, and Cys-604/Cys-634. N-linked (GlcNAc...) asparagine glycosylation is present at Asn-401. N-linked (GlcNAc...) asparagine glycosylation occurs at Asn-607. A Phosphothreonine modification is found at Thr-609. N-linked (GlcNAc...) asparagine glycans are attached at residues Asn-692, Asn-844, Asn-877, and Asn-881. Residues 760 to 939 form the GAIN-B domain; the sequence is RDAYQVTDNL…AILAQLSADA (180 aa). 2 disulfide bridges follow: Cys-884-Cys-921 and Cys-909-Cys-923. The tract at residues 884–939 is GPS; sequence CILWDETDVPSSSAPPQLGPWSWRGCRTVPLDALRTRCLCDRLSTFAILAQLSADA. An N-terminal stalk following vasculostatin-120 cleavage which is not required for signaling activity region spans residues 927–943; that stretch reads STFAILAQLSADANMEK. Residues 949–969 form a helical membrane-spanning segment; the sequence is VTLIVGCGVSSLTLLMLVIIY. Residues 970-980 lie on the Cytoplasmic side of the membrane; it reads VSVWRYIRSER. Residues 981–1001 traverse the membrane as a helical segment; sequence SVILINFCLSIISSNALILIG. Residues 1002-1008 lie on the Extracellular side of the membrane; that stretch reads QTQTRNK. A helical membrane pass occupies residues 1009–1029; it reads VVCTLVAAFLHFFFLSSFCWV. Residues 1030–1052 lie on the Cytoplasmic side of the membrane; it reads LTEAWQSYMAVTGHLRNRLIRKR. Residues 1053 to 1073 form a helical membrane-spanning segment; the sequence is FLCLGWGLPALVVAISVGFTK. Residues 1074–1093 lie on the Extracellular side of the membrane; that stretch reads AKGYSTMNYCWLSLEGGLLY. A helical transmembrane segment spans residues 1094–1114; that stretch reads AFVGPAAAVVLVNMVIGILVF. The Cytoplasmic segment spans residues 1115 to 1136; that stretch reads NKLVSKDGITDKKLKERAGASL. Residues 1137 to 1157 traverse the membrane as a helical segment; sequence WSSCVVLPLLALTWMSAVLAV. At 1158–1166 the chain is on the extracellular side; that stretch reads TDRRSALFQ. The helical transmembrane segment at 1167–1187 threads the bilayer; that stretch reads ILFAVFDSLEGFVIVMVHCIL. Over 1188–1584 the chain is Cytoplasmic; the sequence is RREVQDAVKC…QDIIDLQTEV (397 aa). An involved in interaction with MAGI1 region spans residues 1365 to 1584; sequence YSIHIDQMPQ…QDIIDLQTEV (220 aa). 2 disordered regions span residues 1385–1475 and 1501–1548; these read EASL…RRKS and RKLQ…KKEL. Residues 1391–1439 show a composition bias toward pro residues; it reads RSPPSRQPPSGGPPEAPPAQPPPPPPPPPPPPQQPLPPPPNLEPAPPSL. The span at 1453 to 1469 shows a compositional bias: polar residues; that stretch reads TGPSTKNENVATLSVSS. Ser-1469 bears the Phosphoserine mark. Residues 1501–1522 are compositionally biased toward basic and acidic residues; it reads RKLQHAAEKDKEVLGPDSKPEK. The indispensable for interaction with MAGI1 stretch occupies residues 1581 to 1584; that stretch reads QTEV.

This sequence belongs to the G-protein coupled receptor 2 family. LN-TM7 subfamily. Interacts with ELMO1 and DOCK. When bound to ELMO1 and DOCK1, acts as a module to promote apoptotic cell engulfment. Interacts with MDM2; the interaction results in inhibition of MDM2-mediated ubiquitination and degradation of DLG4/PSD95. Interacts with PARD3 and TIAM1; the interaction is required for correct dendritic. localization of PARD3 and TIAM1 and for dendritic spine formation. Interacts with MAGI1. Interacts with MAGI3. Interacts with BAIAP2. Interacts with PHYHIP. Interacts with DLG4 (via PDZ domain). Vasculostatin-120: Interacts with CD36. Vasculostatin-120: Interacts with ARRB2. Interacts with BAIAP3; this interaction is direct. Proteolytically cleaved to produce vasculostatin-40 and vasculostatin-120. Vasculostatin-40 is the major form and is produced through proteolytic cleavage by MMP14 between residues 321 and 329 with cleavage likely to be between Ser-326 and Leu-327. In terms of processing, ubiquitinated. In terms of tissue distribution, expressed in brain (at protein level). Expressed on mononuclear phagocytes and monocyte-derived macrophages in the gastric mucosa (at protein level). Expressed in normal pancreatic tissue but not in pancreatic tumor tissue. Reduced or no expression is observed in some glioblastomas.

Its subcellular location is the cell membrane. The protein resides in the cell projection. It localises to the phagocytic cup. It is found in the cell junction. The protein localises to the focal adhesion. Its subcellular location is the dendritic spine. The protein resides in the postsynaptic density. It localises to the secreted. Functionally, phosphatidylserine receptor which enhances the engulfment of apoptotic cells. Also mediates the binding and engulfment of Gram-negative bacteria. Stimulates production of reactive oxygen species by macrophages in response to Gram-negative bacteria, resulting in enhanced microbicidal macrophage activity. In the gastric mucosa, required for recognition and engulfment of apoptotic gastric epithelial cells. Promotes myoblast fusion. Activates the Rho pathway in a G-protein-dependent manner. Inhibits MDM2-mediated ubiquitination and degradation of DLG4/PSD95, promoting DLG4 stability and regulating synaptic plasticity. Required for the formation of dendritic spines by ensuring the correct localization of PARD3 and TIAM1. Potent inhibitor of angiogenesis in brain and may play a significant role as a mediator of the p53/TP53 signal in suppression of glioblastoma. In terms of biological role, inhibits angiogenesis in a CD36-dependent manner. Inhibits angiogenesis. The protein is Adhesion G protein-coupled receptor B1 of Homo sapiens (Human).